Consider the following 73-residue polypeptide: Aminopeptidase G (73 aa).

A disordered region spans residues G39–P73. Composition is skewed to low complexity over residues A42–G51 and R61–P73.

This sequence belongs to the peptidase M1 family. Requires Zn(2+) as cofactor.

Its subcellular location is the cytoplasm. In terms of biological role, hydrolyzes preferentially the N-terminal glycine and can also hydrolyze other amino acids which are used by PepN but is unable to hydrolyze basic amino acids. The polypeptide is Aminopeptidase G (pepG) (Streptomyces lividans).